The chain runs to 767 residues: Probable beta-D-xylosidase 7 (767 aa).

The signal sequence occupies residues 1 to 19 (MAKQLLLLLLLFIVHGVES). A glycan (N-linked (GlcNAc...) asparagine) is linked at asparagine 100. Aspartate 292 is a catalytic residue. N-linked (GlcNAc...) asparagine glycosylation occurs at asparagine 643.

This sequence belongs to the glycosyl hydrolase 3 family.

Its subcellular location is the secreted. It localises to the extracellular space. The protein resides in the extracellular matrix. This Arabidopsis thaliana (Mouse-ear cress) protein is Probable beta-D-xylosidase 7 (BXL7).